The sequence spans 476 residues: Chromosomal replication initiator protein DnaA (476 aa).

The segment at 1 to 87 (MSESSHVGLW…LMYNVLVDKS (87 aa)) is domain I, interacts with DnaA modulators. The tract at residues 87-130 (SSGATVNQESTTRSTAIPQSGLPRVDERKAPGLLRAPAVQDLDP) is domain II. Positions 131–348 (HLNPNYNFET…GIVISIMAHS (218 aa)) are domain III, AAA+ region. The ATP site is built by glycine 176, glycine 178, lysine 179, and threonine 180. Positions 349–476 (TIYNKEIDLD…KKRNVSNGER (128 aa)) are domain IV, binds dsDNA.

Belongs to the DnaA family. In terms of assembly, oligomerizes as a right-handed, spiral filament on DNA at oriC.

The protein localises to the cytoplasm. Functionally, plays an essential role in the initiation and regulation of chromosomal replication. ATP-DnaA binds to the origin of replication (oriC) to initiate formation of the DNA replication initiation complex once per cell cycle. Binds the DnaA box (a 9 base pair repeat at the origin) and separates the double-stranded (ds)DNA. Forms a right-handed helical filament on oriC DNA; dsDNA binds to the exterior of the filament while single-stranded (ss)DNA is stabiized in the filament's interior. The ATP-DnaA-oriC complex binds and stabilizes one strand of the AT-rich DNA unwinding element (DUE), permitting loading of DNA polymerase. After initiation quickly degrades to an ADP-DnaA complex that is not apt for DNA replication. Binds acidic phospholipids. This chain is Chromosomal replication initiator protein DnaA, found in Bacteroides fragilis (strain YCH46).